Consider the following 1704-residue polypeptide: MAVLRQLTLLLWKNYTLKKRKVLVTVLELFLPLLFSGILIWLRLKIQSENVPNATVYPDQSIQELPLFFSFPPPGGTWELAYVPSHSDAARTITETVKREFMIKMRVHGFSSEKDFEDYIRYDNHSSSVLAAVVFEHSFNHSQDPLPLAVKYHLRFSYTRRNYMWTQTGNIFLKETEGWHTTSLFPLFPSPGPREPSSPDGGEPGYIREGFLAMQHAVDKAIMRYHANTSAQQLFQKLMVITKRFPFPPYISDPFLIAIQYQLPLLLMLSFTYTSLTIIRAVVQEKEKKLKEYMRMMGLNSWLHWSAWFLMFFLFFLIVVSFMTLLFCVKVKKDIAVLSNSDPSLVLAFLLCFAISSISFSFMVSTFFSKANIAAAVGGFLYFFTYTPYFFVAPRYNWMTLSQKLLSCLLSNVAMAMGAQLIGKFEAKGTGIQWRDLLNPVNVDDNFCFGQVLGMLLLDSALYGLVTWYVEAVFPGQFGVPQPWHFFLMPSYWCGNPRTVVGKEEEGSDPEKALRNEYFEAEPEDLVAGIKIKHLSKVFQVGNKDKMGIRDLTLNLYEGQITVLLGHNGAGKTTTMSLLTGLFPPTSGHAYIHGYEISQDMAQIRKSLGLCPQHDVLFDNLTVAEHLYFYAQLKGLSLQKCPEEVKQMLHILSLEDKRDLRSKFLSGGMKRKLSIGIALIAGSKVLMLDEPTSGMDAVSRRAIWDLLQQQKSDRTVLLTTHFMDEADLLGDRIAILAKGELQCCGSSLFLKQKYGAGYHMTLVKEPHCNPEGISQLVHHHVPNAMLESHAGAELSFILPKESTHRFESLFAKLEKKQKELGIASFGASVTTMEEVFLRVGKLVDTSMDIQAIQLPALQYQHERRASDWALDSNLCGVMDPTNGIGALIEEEEVLVKLNTGLALHCQQFWAMFLKKAAYSWREWKMVAAQVLVPLTCLTLALLAIHYTSEIFDDPLLKLSLNEYGRTVVPFSVPGTSRLAQQLSENLRDMLQAERQEPREVLGDLEEFLVFRASVEGGGFNERCLVATSFKDRGELTVVTALFNNQAYHSPATALAIVDNLLFKLLCGPQASIEISNYPQPRNTLQVAKDHFNEGRKGFDIALNLLIAMAFLASTFSILAVSERAVQAKHVQFVSGVHVATFWFSALLWDLISFLVPSLLLLVVFQAFNVHAFTRDGHMADLLLLLMLYGWAIIPLMYLMSFFFSAASTAYTRLTIFNILSGIATFIMVTIMRIPAVKLEELSRTLDHVFLVLPNHCLGMAVSNFYENYETRRYCTSSELAAHYCKKYNIQYQESFYAWSTPGVGKFVTSMAASGGIYLTLLFLIETNLLWRLRTFICAFRRRWTLAELQNRTSVLPEDQDVAEERSRILVPSLDSMLDTPLIINELSKVYDQRAPLLAVDRISLAVQKGECFGLLGFNGAGKTTTFKMLTGEETITSGDAFVGGYSISSDIGKVRQRMGYCPQFDALLDHMTGREMLVMYARLRGIPERLINACVENTLRGLLLEPHANKLVKTYSGGNKRKLSTGIALIGEPAVIFLDEPSTGMDPVARRLLWDTVARARESGKAIVITSHSMEECEALCTRLAIMVQGQFKCLGSPQHLKSKFGSGYSLQAKVRSEGKQDALEEFKAFVDLTFPGSILEDEHQDMVHYHLPGCDLSWAKVFGILEKAKEKYGVDDYSVSQISLEQVFLSFAHLQPPTTEDGR.

N-linked (GlcNAc...) asparagine glycosylation is present at Asn14. The chain crosses the membrane as a helical span at residues 22–42 (VLVTVLELFLPLLFSGILIWL). N-linked (GlcNAc...) asparagine glycosylation is found at Asn53, Asn124, Asn140, and Asn228. The next 6 membrane-spanning stretches (helical) occupy residues 261–283 (YQLP…RAVV), 307–327 (AWFL…TLLF), 344–364 (SLVL…SFMV), 373–393 (IAAA…FFVA), 405–425 (LLSC…IGKF), and 447–467 (FCFG…GLVT). Residues 530–763 (IKIKHLSKVF…YGAGYHMTLV (234 aa)) enclose the ABC transporter 1 domain. Residue 566 to 573 (GHNGAGKT) participates in ATP binding. The N-linked (GlcNAc...) asparagine glycan is linked to Asn620. Transmembrane regions (helical) follow at residues 925-945 (MVAA…LAIH), 1100-1120 (IALN…ILAV), 1144-1164 (SALL…LVVF), 1183-1203 (LLLM…SFFF), 1213-1233 (LTIF…IMRI), 1245-1265 (LDHV…SNFY), and 1310-1330 (MAAS…NLLW). Asn1350 is a glycosylation site (N-linked (GlcNAc...) asparagine). One can recognise an ABC transporter 2 domain in the interval 1381-1614 (LIINELSKVY…FGSGYSLQAK (234 aa)). 1416–1423 (GFNGAGKT) is a binding site for ATP.

The protein belongs to the ABC transporter superfamily. ABCA family. Homooligomer; disulfide-linked. Post-translationally, N-glycosylated. Localization at intracellular vesicles is accompanied by processing of oligosaccharide from high mannose type to complex type. N-linked glycosylation at Asn-124 and Asn-140 is required for stability and efficient anterograde trafficking and prevents from proteasomal degradation. Proteolytically cleaved by CTSL and to a lower extent by CTSB within multivesicular bodies (MVB) and lamellar bodies (LB) leading to a mature form of 150 kDa. In terms of tissue distribution, highly expressed in the lung and moderately expressed in the kidney, adipose, macrophage, and spleen.

The protein resides in the endosome. It is found in the multivesicular body membrane. It localises to the cytoplasmic vesicle membrane. The protein localises to the late endosome membrane. Its subcellular location is the lysosome membrane. The catalysed reaction is a 1,2-diacyl-sn-glycero-3-phospho-(1'-sn-glycerol)(in) + ATP + H2O = a 1,2-diacyl-sn-glycero-3-phospho-(1'-sn-glycerol)(out) + ADP + phosphate + H(+). It catalyses the reaction a 1,2-diacyl-sn-glycero-3-phosphocholine(in) + ATP + H2O = a 1,2-diacyl-sn-glycero-3-phosphocholine(out) + ADP + phosphate + H(+). It carries out the reaction ATP + H2O + phospholipidSide 1 = ADP + phosphate + phospholipidSide 2.. The enzyme catalyses ATP + H2O + xenobioticSide 1 = ADP + phosphate + xenobioticSide 2.. The catalysed reaction is 1,2-dihexadecanoyl-sn-glycero-3-phosphocholine(in) + ATP + H2O = 1,2-dihexadecanoyl-sn-glycero-3-phosphocholine(out) + ADP + phosphate + H(+). It catalyses the reaction cholesterol(in) + ATP + H2O = cholesterol(out) + ADP + phosphate + H(+). Functionally, catalyzes the ATP-dependent transport of phospholipids such as phosphatidylcholine and phosphoglycerol from the cytoplasm into the lumen side of lamellar bodies, in turn participates in the lamellar bodies biogenesis and homeostasis of pulmonary surfactant. Transports preferentially phosphatidylcholine containing short acyl chains. In addition plays a role as an efflux transporter of miltefosine across macrophage membranes and free cholesterol (FC) through intralumenal vesicles by removing FC from the cell as a component of surfactant and protects cells from free cholesterol toxicity. The polypeptide is Phospholipid-transporting ATPase ABCA3 (Abca3) (Mus musculus (Mouse)).